The following is a 179-amino-acid chain: Stathmin-2 (179 aa).

The interval 1-26 (MAKTAMAYKEKMKELSMLSLICSCFY) is membrane attachment. Serine 16, serine 50, serine 62, serine 73, serine 80, and serine 97 each carry phosphoserine. The SLD domain occupies 38 to 179 (DDMEVKQINK…NKELQVELSG (142 aa)). The segment at 39–96 (DMEVKQINKRASGQAFELILKPPSPVSEAPRTLASPKKKELSLEEIQKKLEAAEERRK) is regulatory/phosphorylation domain. The stretch at 74–179 (PKKKELSLEE…NKELQVELSG (106 aa)) forms a coiled coil.

Belongs to the stathmin family. Expression is neuron-specific and found in cerebellum, forebrain, midbrain, tectum and spinal cord.

It is found in the cytoplasm. The protein localises to the perinuclear region. The protein resides in the cell projection. Its subcellular location is the growth cone. It localises to the membrane. It is found in the axon. The protein localises to the lamellipodium. Is a key regulator of neurite extension through regulation of microtubule instabilily. This Gallus gallus (Chicken) protein is Stathmin-2 (STMN2).